The sequence spans 129 residues: Probable cytochrome b5 2 (129 aa).

In terms of domain architecture, Cytochrome b5 heme-binding spans 3–79; the sequence is EKTITVEEVL…LEKFYIGNLL (77 aa). Heme is bound by residues His-38 and His-62. Residues 105 to 125 form a helical membrane-spanning segment; it reads VKPAMWLFVLVMVVAYFAFRK.

It belongs to the cytochrome b5 family.

It is found in the endoplasmic reticulum membrane. The protein localises to the microsome membrane. Its subcellular location is the mitochondrion. Its function is as follows. Membrane bound hemoprotein which function as an electron carrier for several membrane bound oxygenases. This Schizosaccharomyces pombe (strain 972 / ATCC 24843) (Fission yeast) protein is Probable cytochrome b5 2 (oca8).